The following is a 904-amino-acid chain: MATIHVDGKELEVDGADNLLQACLSLGLDIPYFCWHPALGSVGACRQCAVKQYTDENDKRGRIVMSCMTPATDGSWISIDDEEAKVFRASVVEWLMTNHPHDCPVCEEGGHCHLQDMTVMTGHNERRYRFTKRTHQNQDLGPFISHEMNRCIACYRCVRFYKDYAGGTDLGVFGAHDNVYFGRVEDGTLESEFSGNLTEVCPTGVFTDKTHSERYNRKWDMQFSPSICHGCSSGCNISPGERYGELRRIENRFNGSVNQYFLCDRGRFGYGYVNRKDRPRQPLLANGAKLSLDQALDKAAELLRGRNIVGIGSPRASLESNYALRELVGAEHFYSGIEAGELERIRLVLQVLKDSPLPVPNMRDIEDHDAVFVLGEDLTQTAARMALALRQSVKGKAEDMADAMRVQPWLDAAVKNIGQHALNPLFIASLAETKLDDVAEECVHAAPDDLARIGFAVAHALDASAPAVDGLDSEAAALAQRIADALLAAKRPLIIAGTSLGSKALIEAAANIAKALKLREKNGSISLIVPEANSLGLAMLGGESVDAALQAVIDGSADAIVVLENDLYTRTDKAKVDAALNAAKVLIVADHQKTATTDRAHLVLPAASFAEGDGTLVSQEGRAQRFFQVFDPQYLDASILVHEGWRWLHALRATLLDQPIDWTQLDHVTAAVASSSPQLAAIVDAAPSASFRIKGLKLAREPLRYSGRTAMRADISVHEPRTSQDNDTAFSFSMEGYSGSTEPRSQVPFAWSPGWNSPQAWNKFQDEVGGHLRAGDPGTRLIESQGDHLSWFASVPRAFNPAPGTWQVVPFHHLFGSEENSSKAAPVQERIPAAYVSLAKSEADRLGVNDGALLSLNVAGQTLRLPLRINEELGAGLVALPAGLAGIPPAIFGKTVDGLQEAAQ.

Residues 1-83 (MATIHVDGKE…GSWISIDDEE (83 aa)) enclose the 2Fe-2S ferredoxin-type domain. Residues cysteine 34, cysteine 45, cysteine 48, and cysteine 67 each coordinate [2Fe-2S] cluster. The 40-residue stretch at 83–122 (EAKVFRASVVEWLMTNHPHDCPVCEEGGHCHLQDMTVMTG) folds into the 4Fe-4S His(Cys)3-ligated-type domain. [4Fe-4S] cluster contacts are provided by histidine 99, cysteine 103, cysteine 106, cysteine 112, cysteine 151, cysteine 154, cysteine 157, cysteine 201, cysteine 228, cysteine 231, cysteine 235, and cysteine 263. The region spanning 221–277 (MQFSPSICHGCSSGCNISPGERYGELRRIENRFNGSVNQYFLCDRGRFGYGYVNRKD) is the 4Fe-4S Mo/W bis-MGD-type domain.

The protein belongs to the complex I 75 kDa subunit family. Composed of 13 different subunits. Subunits NuoCD, E, F, and G constitute the peripheral sector of the complex. It depends on [2Fe-2S] cluster as a cofactor. Requires [4Fe-4S] cluster as cofactor.

The catalysed reaction is a quinone + NADH + 5 H(+)(in) = a quinol + NAD(+) + 4 H(+)(out). Its function is as follows. NDH-1 shuttles electrons from NADH, via FMN and iron-sulfur (Fe-S) centers, to quinones in the respiratory chain. The immediate electron acceptor for the enzyme in this species is believed to be ubiquinone. Couples the redox reaction to proton translocation (for every two electrons transferred, four hydrogen ions are translocated across the cytoplasmic membrane), and thus conserves the redox energy in a proton gradient. Required for plants roots colonization. This Pseudomonas fluorescens protein is NADH-quinone oxidoreductase subunit G (nuoG).